The sequence spans 86 residues: Sec-independent protein translocase protein TatA (86 aa).

The helical transmembrane segment at 3 to 23 threads the bilayer; sequence IFGVGLPEVTVILILALLIFG. The segment at 56–86 is disordered; sequence MNEEDESPKSIESNQTNEINQEKIDSENSKK. Residues 65–74 are compositionally biased toward polar residues; that stretch reads SIESNQTNEI. Residues 75 to 86 show a composition bias toward basic and acidic residues; sequence NQEKIDSENSKK.

This sequence belongs to the TatA/E family. Forms a complex with TatC.

It is found in the cell inner membrane. Functionally, part of the twin-arginine translocation (Tat) system that transports large folded proteins containing a characteristic twin-arginine motif in their signal peptide across membranes. TatA could form the protein-conducting channel of the Tat system. The protein is Sec-independent protein translocase protein TatA of Prochlorococcus marinus (strain MIT 9215).